Reading from the N-terminus, the 629-residue chain is MFSRSILLRSVRKSLGRYYSSQAHPQTYIYNLLSDTKCRSCGIQLQDKFPDKPGYYRLPGQNDSNTDKKAKTSELNKKYEKILQNLDISDRNLLINNFSAPKQDDEKVASVPSLQQITPVEADTRDTTKDQQTHSGHSLSCKRCNDVIYNSKTRSIYDPNRDNLNKSEFPIPKLQQVLSTIPVDAPLVYVFSANDFPMGINKDIFQYRPPQQIYFVMTKSDILIPKTNVAFYNNFKKFLQNYMFKKFNVPRENVFIASGKDRWKMTDLYHFIPNYSYIIGDTNCGKSTLVKSLLINHHVKHWKYEALQQRPDEKQSSSASLKNKDFKKLDRLIDSFSSKNGPGTSHIPGFTRDVVPVDIDGIKELFDVPGFTTNENLQDIFDKLNHKQIARITKGANTSKYGSLKSKFDTVKNGQVLSLNGVGYLQFPGQDSMYQIRNVTKFALHKFKNLEKVDSILQRNEIPKSMSSHFIVNRQQQQQQRNELRGYYKRYIIPPFYGTIDLVIKDIGYINIKPTGKKLTNELMVLYLHPSLEAIIRQPILNYIDSPTPKKSPDGTNRKTITSDISKTPFYSRLIPSTVLSDPSSLVLSPPSSDYNQLNQYLQIDESSESAYNDLLELDETNKYDYWIE.

The transit peptide at 1-19 directs the protein to the mitochondrion; that stretch reads MFSRSILLRSVRKSLGRYY. The interval 52–71 is disordered; it reads KPGYYRLPGQNDSNTDKKAK. In terms of domain architecture, CP-type G spans 171 to 374; it reads IPKLQQVLST…LFDVPGFTTN (204 aa).

This sequence belongs to the TRAFAC class YlqF/YawG GTPase family. GEP3 subfamily.

It is found in the mitochondrion. Its function is as follows. May be involved in the mitochondrial lipid metabolism. The chain is Genetic interactor of prohibitins 3, mitochondrial (GEP3) from Candida albicans (strain SC5314 / ATCC MYA-2876) (Yeast).